The primary structure comprises 182 residues: Ribosome-recycling factor (182 aa).

The protein belongs to the RRF family.

It localises to the cytoplasm. Responsible for the release of ribosomes from messenger RNA at the termination of protein biosynthesis. May increase the efficiency of translation by recycling ribosomes from one round of translation to another. This is Ribosome-recycling factor from Prochlorococcus marinus (strain MIT 9215).